Here is a 152-residue protein sequence, read N- to C-terminus: uncharacterized protein (152 aa).

This is an uncharacterized protein from Homo sapiens (Human).